We begin with the raw amino-acid sequence, 187 residues long: MLPLYLLTNAKGQQMQIELKNGEIIQGILTNVDNWMNLTLSNVTEYSEESAINSEDNAESSKAVKLNEIYIRGTFIKFIKLQDNIIDKVKQQINSNNNSNSNGPGHKRYYNNRDSNNNRGNYNRRNNNNGNSNRRPYSQNRQYNNSNSSNINNSINSINSNNQNMNNGLGGSVQHHFNSSSPQKVEF.

A Sm domain is found at 2–85 (LPLYLLTNAK…IKFIKLQDNI (84 aa)). The interval 93–187 (INSNNNSNSN…NSSSPQKVEF (95 aa)) is disordered. Over residues 112 to 167 (NRDSNNNRGNYNRRNNNNGNSNRRPYSQNRQYNNSNSSNINNSINSINSNNQNMNN) the composition is skewed to low complexity. Omega-N-methylarginine is present on arginine 119. A compositionally biased stretch (polar residues) spans 175-187 (HHFNSSSPQKVEF). Serine 181 is modified (phosphoserine).

The protein belongs to the snRNP Sm proteins family. In terms of assembly, component of the heptameric LSM1-LSM7 complex that forms a seven-membered ring structure with a donut shape. The LSm subunits are arranged in the order LSM1, LSM2, LSM3, LSM6, LSM5, LSM7 and LSM4. Except for LSM1, where a C-terminal helix crosses the ring structure to form additional interactions with LSM3 and LSM6, each subunit interacts only with its two neighboring subunits. The LSM1-LSM7 complex interacts with PAT1; within the complex PAT1 has direct interactions with LSM2 and LSM3. The LSM1-LSM7 complex interacts with XRN1. Component of the heptameric LSM2-LSM8 complex that forms a seven-membered ring structure with a donut shape; an RNA strand can pass through the hole in the center of the ring structure. The LSm subunits are arranged in the order LSM8, LSM2, LSM3, LSM6, LSM5, LSM7 and LSM4. Component of the spliceosome U4/U6-U5 tri-snRNP complex composed of the U4, U6 and U5 snRNAs and at least PRP3, PRP4, PRP6, PRP8, PRP18, PRP31, PRP38, SNU13, SNU23, SNU66, SNU114, SPP381, SMB1, SMD1, SMD2, SMD3, SMX2, SMX3, LSM2, LSM3, LSM4, LSM5, LSM6, LSM7, LSM8, BRR2 and DIB1. May be found in a complex comprising LSM2-LSM7 without LSM1 or LSM8; the complex associates with pre-P RNA and snoRNA SNR5.

It localises to the nucleus. The protein localises to the cytoplasm. In terms of biological role, component of LSm protein complexes, which are involved in RNA processing and may function in a chaperone-like manner. Component of the cytoplasmic LSM1-LSM7 complex which is involved in mRNA degradation by activating the decapping step. Together with PAT1, the LSM1-LSM7 complex binds to osmotic stress-activated mRNAs to attenuate the osmotic stress response, probably by limiting ribosome access to the mRNA and consequently translation. Component of the nuclear LSM2-LSM8 complex, which is involved in spliceosome assembly. The LSM2-LSM8 complex plays a role in the biogenesis of the spliceosomal U4/U6-U5 tri-snRNP complex by accelerating PRP24-mediated annealing of U4/U6 di-snRNA. The LSM2-LSM8 complex binds U6 snRNA terminating with a non-cyclic 3' phosphate group. LSM2-LSM8 is probably also involved in degradation of nuclear pre-mRNA by targeting them for decapping. LSM2-LSM8 could be involved in processing of pre-tRNAs, pre-rRNAs and U3 snoRNA, although involvement may be indirect. In a complex that probably contains LSM2-LSM7, but not LSM1 or LSM8, associates with the precursor of the RNA component of RNase P (pre-P RNA) and may be involved in maturing pre-P RNA; the complex also associates with snoRNA SNR5. This chain is LSM complex subunit LSM4, found in Saccharomyces cerevisiae (strain ATCC 204508 / S288c) (Baker's yeast).